The chain runs to 438 residues: Trigger factor (438 aa).

Residues Asp160 to Pro245 enclose the PPIase FKBP-type domain.

This sequence belongs to the FKBP-type PPIase family. Tig subfamily.

It localises to the cytoplasm. It catalyses the reaction [protein]-peptidylproline (omega=180) = [protein]-peptidylproline (omega=0). In terms of biological role, involved in protein export. Acts as a chaperone by maintaining the newly synthesized protein in an open conformation. Functions as a peptidyl-prolyl cis-trans isomerase. This chain is Trigger factor, found in Francisella tularensis subsp. holarctica (strain OSU18).